A 102-amino-acid polypeptide reads, in one-letter code: Complement inhibitor RaCI6 (102 aa).

Residues 1-24 (MAALNGLVLLLLTISAMFISECYS) form the signal peptide. 2 cysteine pairs are disulfide-bonded: Cys37–Cys61 and Cys42–Cys63.

Belongs to the RaCI family. Expressed in salivary glands.

It is found in the secreted. Complement inhibitor. Prevents complement-mediated C5 activation by binding to C5. Binds C5 at a different binding site than the other tick complement inhibitors OmCI and CirpT1, and the drug eculizumab. The polypeptide is Complement inhibitor RaCI6 (Dermacentor andersoni (Rocky mountain wood tick)).